Here is a 350-residue protein sequence, read N- to C-terminus: MQVSDFHFDLPDELIARYPQPERTASRLLQMDGNTGELIDGTFSDVLEQVQAGDLVVFNNTRVIPARLFGRKESGGKLEVLVERMLNEKSILAHVRCSKSPKPGTTILVGENDEYSAQMVARHDALFELKFNSDKTVLEILEEIGHMPLPPYIDRPDEDADKERYQTVYNQKPGAVAAPTAGLHFDDVLLEKITAKGAEFAYVTLHVGAGTFQPVKVDDIDDHHMHAEYVEVPQDVVDAINATKARGGRVVAVGTTSVRSLESAAQDALKKGTELVPFFGDTEIFIYPGYEYQLVDCLITNFHLPESTLIMLVSAFAGYENTMNAYKHAVENKYRFFSYGDSMFIKKKTA.

Belongs to the QueA family. Monomer.

It localises to the cytoplasm. It carries out the reaction 7-aminomethyl-7-carbaguanosine(34) in tRNA + S-adenosyl-L-methionine = epoxyqueuosine(34) in tRNA + adenine + L-methionine + 2 H(+). It participates in tRNA modification; tRNA-queuosine biosynthesis. In terms of biological role, transfers and isomerizes the ribose moiety from AdoMet to the 7-aminomethyl group of 7-deazaguanine (preQ1-tRNA) to give epoxyqueuosine (oQ-tRNA). The sequence is that of S-adenosylmethionine:tRNA ribosyltransferase-isomerase from Vibrio campbellii (strain ATCC BAA-1116).